A 343-amino-acid chain; its full sequence is Ribosomal RNA small subunit methyltransferase C (343 aa).

Belongs to the methyltransferase superfamily. RsmC family. In terms of assembly, monomer.

The protein localises to the cytoplasm. It catalyses the reaction guanosine(1207) in 16S rRNA + S-adenosyl-L-methionine = N(2)-methylguanosine(1207) in 16S rRNA + S-adenosyl-L-homocysteine + H(+). In terms of biological role, specifically methylates the guanine in position 1207 of 16S rRNA in the 30S particle. The chain is Ribosomal RNA small subunit methyltransferase C from Shigella flexneri.